The following is a 158-amino-acid chain: 3-hydroxyacyl-[acyl-carrier-protein] dehydratase FabZ (158 aa).

Residue His-57 is part of the active site.

It belongs to the thioester dehydratase family. FabZ subfamily.

The protein localises to the cytoplasm. It carries out the reaction a (3R)-hydroxyacyl-[ACP] = a (2E)-enoyl-[ACP] + H2O. Functionally, involved in unsaturated fatty acids biosynthesis. Catalyzes the dehydration of short chain beta-hydroxyacyl-ACPs and long chain saturated and unsaturated beta-hydroxyacyl-ACPs. This is 3-hydroxyacyl-[acyl-carrier-protein] dehydratase FabZ from Anaeromyxobacter sp. (strain Fw109-5).